Here is a 915-residue protein sequence, read N- to C-terminus: DNA (cytosine-5)-methyltransferase 2 (915 aa).

Positions 1 to 14 are enriched in low complexity; that stretch reads MAPSSPSSARPTRA. Positions 1–171 are disordered; sequence MAPSSPSSAR…STAANKPEED (171 aa). Residues 15–30 are compositionally biased toward basic and acidic residues; it reads SGRERSAMAEEIHQNQ. Residues 42–57 are compositionally biased toward basic residues; it reads AKRRRKAASSGKKPKP. Residues 71–80 are compositionally biased toward basic and acidic residues; it reads KKGETEKTEP. The segment covering 81–108 has biased composition (acidic residues); sequence VVDDVCAEEPDEEELAMGEEEAEAEEQA. Low complexity predominate over residues 109-119; the sequence is MQEVVAAVAAG. Positions 188–313 constitute a BAH domain; sequence IVYCLGDDVY…VAYSTFANIS (126 aa). Residues 315-328 show a composition bias toward polar residues; sequence ENGQSGSETASGIS. The interval 315–338 is disordered; the sequence is ENGQSGSETASGISSDDAGLETSS. The 532-residue stretch at 345–876 folds into the SAM-dependent MTase C5-type domain; the sequence is ATLLDLYSGC…YCLGQAYLGE (532 aa). A Chromo domain is found at 445–508; the sequence is FVVQKLIGIR…EGRKRKILPL (64 aa). Cys521 is an active-site residue.

This sequence belongs to the class I-like SAM-binding methyltransferase superfamily. C5-methyltransferase family.

The protein localises to the nucleus. The catalysed reaction is a 2'-deoxycytidine in DNA + S-adenosyl-L-methionine = a 5-methyl-2'-deoxycytidine in DNA + S-adenosyl-L-homocysteine + H(+). Functionally, may be involved in the CpXpG methylation and in gene silencing. The sequence is that of DNA (cytosine-5)-methyltransferase 2 (ZMET5) from Zea mays (Maize).